A 366-amino-acid chain; its full sequence is MASGSSSDAAESAEPAAAPAAAETEEDQVKRRRLQSLGFALVTSCDTTVASTFLSENNWQTKKALSAFFEQPENDLARPHQPPTSSKSEDYVDLTNEDANDTTILETSPSGTPLEDSSTISFITWNIDGLDGCNLPERARGVCSCLALYSPDVVFLQEVIPSYCAYLRKRARTYNIITGNEEGYFTAILLKKGRVKFKGQEIIPFPNTKMMRNLLCVNVSLGGNEFCLMTSHLESTRKHSAERINQLKTVFQKMQEATDSTTVIFAGDTNLRDQEVIKCGGLPDNVFDAWEFLGKPKHCRYTWDTKANDNLRIPAACKHRFDRIFFRAEEGHLIPQSLDLIGLERLDCGRFPSDHWGLLCTLNVVL.

Met1 carries the N-acetylmethionine modification. Residues 1-22 (MASGSSSDAAESAEPAAAPAAA) are compositionally biased toward low complexity. The interval 1-30 (MASGSSSDAAESAEPAAAPAAAETEEDQVK) is disordered. Residue Lys30 forms a Glycyl lysine isopeptide (Lys-Gly) (interchain with G-Cter in SUMO2) linkage. Phosphothreonine; by ACVR1B is present on Thr95. The segment at 126–130 (NIDGL) is interaction with 5' end of substrate DNA. The Mg(2+) site is built by Asp128 and Glu158. The interaction with 5' end of substrate DNA stretch occupies residues 232–237 (HLESTR). Residue Asp268 is the Proton donor/acceptor of the active site. Residues 270 to 272 (NLR) form an interaction with 5' end of substrate DNA region.

The protein belongs to the CCR4/nocturin family. Interacts with TRAF2, TRAF3, TRAF5, TRAF6, TNFRSF8/CD30, TNFRSF5/CD40, TNFRSF1B/TNF-R75, ETS1, ETS2, FLI1, SMAD3 and ACVR1B/ALK4. Mg(2+) is required as a cofactor. Requires Mn(2+) as cofactor. In terms of processing, ubiquitinated by TRAF6.

Its subcellular location is the nucleus. The protein localises to the PML body. It localises to the nucleolus. It is found in the cytoplasm. DNA repair enzyme that can remove a variety of covalent adducts from DNA through hydrolysis of a 5'-phosphodiester bond, giving rise to DNA with a free 5' phosphate. Catalyzes the hydrolysis of dead-end complexes between DNA and the topoisomerase 2 (TOP2) active site tyrosine residue. The 5'-tyrosyl DNA phosphodiesterase activity can enable the repair of TOP2-induced DNA double-strand breaks/DSBs without the need for nuclease activity, creating a 'clean' DSB with 5'-phosphate termini that are ready for ligation. Thereby, protects the transcription of many genes involved in neurological development and maintenance from the abortive activity of TOP2. Hydrolyzes 5'-phosphoglycolates on protruding 5' ends on DSBs due to DNA damage by radiation and free radicals. Has preference for single-stranded DNA or duplex DNA with a 4 base pair overhang as substrate. Also has 3'-tyrosyl DNA phosphodiesterase activity, but less efficiently and much slower than TDP1. Constitutes the major if not only 5'-tyrosyl-DNA phosphodiesterase in cells. Also acts as an adapter by participating in the specific activation of MAP3K7/TAK1 in response to TGF-beta: associates with components of the TGF-beta receptor-TRAF6-TAK1 signaling module and promotes their ubiquitination dependent complex formation. Involved in non-canonical TGF-beta induced signaling routes. May also act as a negative regulator of ETS1 and may inhibit NF-kappa-B activation. Acts as a regulator of ribosome biogenesis following stress. The chain is Tyrosyl-DNA phosphodiesterase 2 (Tdp2) from Rattus norvegicus (Rat).